The chain runs to 629 residues: tRNA uridine 5-carboxymethylaminomethyl modification enzyme MnmG (629 aa).

FAD contacts are provided by residues 13–18 (GGGHAG), Val-125, and Ser-180. Position 273–287 (273–287 (GPRYCPSIEDKVMRF)) interacts with NAD(+). Gln-370 is an FAD binding site.

It belongs to the MnmG family. In terms of assembly, homodimer. Heterotetramer of two MnmE and two MnmG subunits. The cofactor is FAD.

It localises to the cytoplasm. In terms of biological role, NAD-binding protein involved in the addition of a carboxymethylaminomethyl (cmnm) group at the wobble position (U34) of certain tRNAs, forming tRNA-cmnm(5)s(2)U34. The protein is tRNA uridine 5-carboxymethylaminomethyl modification enzyme MnmG of Salmonella paratyphi A (strain ATCC 9150 / SARB42).